A 181-amino-acid chain; its full sequence is DNA-packaging protein NU1 homolog (181 aa).

This sequence to phage lambda DNA packaging protein NU1.

The chain is DNA-packaging protein NU1 homolog (nohD) from Escherichia coli (strain K12).